We begin with the raw amino-acid sequence, 2312 residues long: Protein Ycf2 (2312 aa).

Disordered stretches follow at residues 170–191, 223–253, and 942–1009; these read SSQLKGSSDQSRDHFDSIGTED, TEIESDRFSKGLSGSSSKSRLFTEGEKEMNN, and KRKK…KRKE. Low complexity predominate over residues 232–242; it reads KGLSGSSSKSR. Composition is skewed to basic and acidic residues over residues 243–252 and 950–1007; these read LFTEGEKEMN and KRKE…PEKR. Position 1439 to 1446 (1439 to 1446) interacts with ATP; it reads GSIGSGRS. Disordered regions lie at residues 1513-1532, 1857-1983, and 2050-2166; these read YEDRDSDDYEPGASDDYEPG, LVGS…LLRP, and PAEE…DGFS. The span at 1863-1963 shows a compositional bias: acidic residues; that stretch reads TEEEVEGTEE…GEGTEDEEVE (101 aa). The span at 1964–1976 shows a compositional bias: basic and acidic residues; sequence GTEKDSSQFDNDR. Composition is skewed to acidic residues over residues 2050–2067 and 2074–2149; these read PAEEIPEEEDPLPEEALE and GEEE…ENDS.

It belongs to the Ycf2 family.

It localises to the plastid. The protein localises to the chloroplast stroma. Its function is as follows. Probable ATPase of unknown function. Its presence in a non-photosynthetic plant (Epifagus virginiana) and experiments in tobacco indicate that it has an essential function which is probably not related to photosynthesis. In Oenothera parviflora (Small-flowered evening primrose), this protein is Protein Ycf2.